The sequence spans 185 residues: Thymidine kinase (185 aa).

17–24 (GPMFAGKT) is an ATP binding site. Residue Glu-92 is the Proton acceptor of the active site. Residue Phe-121 coordinates substrate. Cys-146 and Cys-149 together coordinate Zn(2+). 166–170 (LILAG) lines the substrate pocket. Zn(2+) is bound by residues Cys-179 and Cys-182.

This sequence belongs to the thymidine kinase family.

The catalysed reaction is thymidine + ATP = dTMP + ADP + H(+). In terms of biological role, phosphorylates thymidine. ASFV replicates in the cytoplasm of infected cells and contains genes encoding a number of enzymes needed for DNA synthesis, including thymidine kinase. Important for growth in swine macrophages in vitro and is a virus virulence factor in swine. This is Thymidine kinase from African swine fever virus (isolate Pig/Kenya/KEN-50/1950) (ASFV).